The primary structure comprises 810 residues: Fibroblast growth factor receptor 1-A (810 aa).

A signal peptide spans 1–26; sequence MKMMMIMKTTLLLISVLLTQALQSQG. The Extracellular segment spans residues 27–363; that stretch reads RPAIQDEAPA…TQLPNQTYLE (337 aa). 3 consecutive Ig-like C2-type domains span residues 28 to 115, 147 to 235, and 244 to 346; these read PAIQ…FNIS, PDKM…YQLD, and PILQ…AWLT. Cys-53 and Cys-99 are joined by a disulfide. N-linked (GlcNAc...) asparagine glycosylation is found at Asn-107, Asn-113, Asn-216, Asn-229, Asn-253, Asn-285, Asn-306, Asn-319, and Asn-358. A disulfide bridge links Cys-167 with Cys-219. A disulfide bridge connects residues Cys-266 and Cys-330. The helical transmembrane segment at 364–384 threads the bilayer; sequence VLIYCVGFFLICVMVGTAVLA. The Cytoplasmic segment spans residues 385–810; the sequence is KMHSSAKKSD…PNRGVAFKKR (426 aa). At Tyr-450 the chain carries Phosphotyrosine; by autocatalysis. One can recognise a Protein kinase domain in the interval 465–754; sequence LVLGKPLGEG…LSMTSNQEYL (290 aa). Residues 471–477, Lys-501, 549–551, and Asn-555 each bind ATP; these read LGEGCFG and EFA. Tyr-570 and Tyr-572 each carry phosphotyrosine; by autocatalysis. Asp-610 acts as the Proton acceptor in catalysis. Arg-614 and Asp-628 together coordinate ATP. Residues Tyr-640, Tyr-641, Tyr-717, and Tyr-753 each carry the phosphotyrosine; by autocatalysis modification. Residues 787-810 are disordered; sequence AGADEPCLPKFPPHPNRGVAFKKR.

Belongs to the protein kinase superfamily. Tyr protein kinase family. Fibroblast growth factor receptor subfamily. Monomer. Homodimer after ligand binding. Interacts with cnpy1. In terms of processing, autophosphorylated. Binding of FGF family members together with heparan sulfate proteoglycan or heparin promotes receptor dimerization and autophosphorylation on tyrosine residues. Autophosphorylation occurs in trans between the two FGFR molecules present in the dimer and proceeds in a highly ordered manner. Phosphotyrosine residues provide docking sites for interacting proteins and so are crucial for FGFR1 function and its regulation. Post-translationally, ubiquitinated. FGFR1 is rapidly ubiquitinated after autophosphorylation, leading to internalization and degradation. N-glycosylated in the endoplasmic reticulum. The N-glycan chains undergo further maturation to an Endo H-resistant form in the Golgi apparatus. Initially expressed in adaxial mesoderm with transcripts distinctly localized to the anterior portion of each half-somite. Hereupon, also strongly expressed in the otic vesicles, branchial arches and the brain, especially at the midbrain-hindbrain boundary (MHB).

It is found in the cell membrane. It localises to the nucleus. Its subcellular location is the cytoplasm. The protein localises to the cytosol. The protein resides in the cytoplasmic vesicle. It catalyses the reaction L-tyrosyl-[protein] + ATP = O-phospho-L-tyrosyl-[protein] + ADP + H(+). Its activity is regulated as follows. Present in an inactive conformation in the absence of bound ligand. Ligand binding leads to dimerization and activation by sequential autophosphorylation on tyrosine residues. Functionally, tyrosine-protein kinase that acts as a cell-surface receptor for fibroblast growth factors and plays an essential role in the regulation of embryonic development, cell proliferation, differentiation and migration. Required for normal mesoderm patterning and normal skeletogenesis. Phosphorylates PLCG1, FRS2, GAB1 and SHB. Ligand binding leads to the activation of several signaling cascades. Activation of PLCG1 leads to the production of the cellular signaling molecules diacylglycerol and inositol-1,4,5-trisphosphate. Phosphorylation of FRS2 triggers recruitment of GRB2, GAB1, PIK3R1 and SOS1, and mediates activation of RAS, MAPK1/ERK2, MAPK3/ERK1 and the MAP kinase signaling pathway, as well as of the AKT1 signaling pathway. Promotes phosphorylation of SHC1, STAT1 and PTPN11/SHP2. In the nucleus, enhances RPS6KA1 and CREB1 activity and contributes to the regulation of transcription. FGFR1 signaling is down-regulated by ubiquitination, internalization and degradation. In Danio rerio (Zebrafish), this protein is Fibroblast growth factor receptor 1-A (fgfr1a).